Reading from the N-terminus, the 373-residue chain is MGSQVSVDTGAVHVVIVGGGFGGIAAASQLQALNVPFMLVDMKDSFHHNVAALRASVESGFAKKTFISYSATFKDNFRQGKVIGIDLKNRMVLLQGGEALPFSHLILATGSTGPFPGKFNEVSCQQAAIQAYEDMVKQIQRSQFIVVVGGGSAGVEMAAEIKTEYPEKEVTLIHSRVPLADKELLPCVRQEVKEILLRKGVQLLLSERVSNLEELPRNEYREYIKVETDKGTEVATNMVIVCNGIKINSSAYRSAFESRLASNGALKVNEFLQVEGYSNIYAIGDCADTKEPKMAYHAGLHANVAVANIVNSMKQRPLKAYKPGALTFLLSMGRNDGVGQISGFYVGRLMVRLAKSRDLLISTSWKTMRQSPP.

G2 carries N-myristoyl glycine lipidation. Residues V7 to A27 traverse the membrane as a helical segment. Residues G18 to G22, R54, and V82 each bind 6-hydroxy-FAD. Residue K168 is modified to N6-acetyllysine. D285 contacts 6-hydroxy-FAD.

The protein belongs to the FAD-dependent oxidoreductase family. As to quaternary structure, interacts with importin subunits KPNA2 and IPO5; this interaction likely mediates the translocation into the nucleus upon oxidative stress. Requires 6-hydroxy-FAD as cofactor. Post-translationally, N-myristoylation at Gly-2 mediates the recruitment to lipid droplets and plasma membrane. In terms of processing, acetylation at Lys-168 prevents AIFM2 ubiquitination and degradation, thereby inhibiting ferroptosis. KAT2B mediates acetylation at Lys-168, while HDAC3 removes it. Ubiquitinated. AIFM2 undergoes 'Lys-29'-ubiquitination and proteasomal degradation, which is inhibited by acetylation at Lys-168. In terms of tissue distribution, detected in most normal tissues as two transcripts of 1.8 and 4.0 kb in length, respectively. Highly expressed in liver, testis, and kidney, and expressed at lower levels in pancreas, spleen, brain and lung. Expressed in heart (at protein level).

It is found in the lipid droplet. The protein localises to the cell membrane. The protein resides in the cytoplasm. It localises to the mitochondrion membrane. Its subcellular location is the nucleus. It catalyses the reaction ubiquinone-10 + NADH + H(+) = ubiquinol-10 + NAD(+). The enzyme catalyses phylloquinone + NADH + H(+) = phylloquinol + NAD(+). It carries out the reaction menaquinone-4 + NADH + H(+) = menaquinol-4 + NAD(+). The catalysed reaction is menadione + NADH + H(+) = menadiol + NAD(+). The modification by 4-hydroxy-2-nonenal (HNE) adduction in mitochondria results in loss of the oxidoreductase activity and activation of a novel function in mitochondrial oxidative stress signaling. In terms of biological role, a NAD(P)H-dependent oxidoreductase that acts as a key inhibitor of ferroptosis. At the plasma membrane, catalyzes reduction of coenzyme Q/ubiquinone-10 to ubiquinol-10, a lipophilic radical-trapping antioxidant that prevents lipid oxidative damage and consequently ferroptosis. Acts in parallel to GPX4 to suppress phospholipid peroxidation and ferroptosis. This anti-ferroptotic function is independent of cellular glutathione levels. Also acts as a potent radical-trapping antioxidant by mediating warfarin-resistant vitamin K reduction in the canonical vitamin K cycle: catalyzes NAD(P)H-dependent reduction of vitamin K (phylloquinone, menaquinone-4 and menadione) to hydroquinone forms. Hydroquinones act as potent radical-trapping antioxidants inhibitor of phospholipid peroxidation and ferroptosis. May play a role in mitochondrial stress signaling. Upon oxidative stress, associates with the lipid peroxidation end product 4-hydroxy-2-nonenal (HNE) forming a lipid adduct devoid of oxidoreductase activity, which then translocates from mitochondria into the nucleus triggering DNA damage and cell death. The protein is Ferroptosis suppressor protein 1 of Mus musculus (Mouse).